Here is a 605-residue protein sequence, read N- to C-terminus: Sulfite reductase [NADPH] flavoprotein alpha-component (605 aa).

A Flavodoxin-like domain is found at 68 to 206; that stretch reads VTVLYGSQTG…PAAEWLEGVL (139 aa). FMN-binding positions include 74 to 78, 121 to 126, and 154 to 185; these read SQTGN, STHGEG, and VLAL…KRIS. The tract at residues 213–234 is disordered; the sequence is GGGSAAPAPAAASQTGESSYSR. Residues 235–454 form the FAD-binding FR-type domain; the sequence is TNPFRAEVLE…VQHNQNFKLP (220 aa). 392 to 395 serves as a coordination point for FAD; it reads RLYS. Residues D495 and 525–533 contribute to the NADP(+) site; that span reads SRDTEEKVY.

In terms of assembly, alpha(8)-beta(8). The alpha component is a flavoprotein, the beta component is a hemoprotein. The cofactor is FAD. FMN serves as cofactor.

The enzyme catalyses hydrogen sulfide + 3 NADP(+) + 3 H2O = sulfite + 3 NADPH + 4 H(+). It participates in sulfur metabolism; hydrogen sulfide biosynthesis; hydrogen sulfide from sulfite (NADPH route): step 1/1. In terms of biological role, component of the sulfite reductase complex that catalyzes the 6-electron reduction of sulfite to sulfide. This is one of several activities required for the biosynthesis of L-cysteine from sulfate. The flavoprotein component catalyzes the electron flow from NADPH -&gt; FAD -&gt; FMN to the hemoprotein component. This chain is Sulfite reductase [NADPH] flavoprotein alpha-component (cysJ), found in Bacillus subtilis (strain 168).